The primary structure comprises 261 residues: Cytochrome c oxidase subunit 2 (261 aa).

Residues M1–Q34 are Mitochondrial intermembrane-facing. Residues G35–S55 form a helical membrane-spanning segment. The Mitochondrial matrix segment spans residues R56 to T87. A helical membrane pass occupies residues I88 to M108. At D109–A261 the chain is on the mitochondrial intermembrane side. Cu cation is bound by residues H188, C223, E225, C227, and H231. E225 lines the Mg(2+) pocket.

It belongs to the cytochrome c oxidase subunit 2 family. As to quaternary structure, component of the cytochrome c oxidase (complex IV, CIV), a multisubunit enzyme composed of a catalytic core of 3 subunits and several supernumerary subunits. The complex exists as a monomer or a dimer and forms supercomplexes (SCs) in the inner mitochondrial membrane with ubiquinol-cytochrome c oxidoreductase (cytochrome b-c1 complex, complex III, CIII). The cofactor is Cu cation.

The protein localises to the mitochondrion inner membrane. The catalysed reaction is 4 Fe(II)-[cytochrome c] + O2 + 8 H(+)(in) = 4 Fe(III)-[cytochrome c] + 2 H2O + 4 H(+)(out). Functionally, component of the cytochrome c oxidase, the last enzyme in the mitochondrial electron transport chain which drives oxidative phosphorylation. The respiratory chain contains 3 multisubunit complexes succinate dehydrogenase (complex II, CII), ubiquinol-cytochrome c oxidoreductase (cytochrome b-c1 complex, complex III, CIII) and cytochrome c oxidase (complex IV, CIV), that cooperate to transfer electrons derived from NADH and succinate to molecular oxygen, creating an electrochemical gradient over the inner membrane that drives transmembrane transport and the ATP synthase. Cytochrome c oxidase is the component of the respiratory chain that catalyzes the reduction of oxygen to water. Electrons originating from reduced cytochrome c in the intermembrane space (IMS) are transferred via the dinuclear copper A center (CU(A)) of subunit 2 and heme A of subunit 1 to the active site in subunit 1, a binuclear center (BNC) formed by heme A3 and copper B (CU(B)). The BNC reduces molecular oxygen to 2 water molecules using 4 electrons from cytochrome c in the IMS and 4 protons from the mitochondrial matrix. The sequence is that of Cytochrome c oxidase subunit 2 (COX2) from Daucus carota (Wild carrot).